The sequence spans 501 residues: MPRRPSGGGGGAGPAAAAVRKVPLRKLLRAASVACGVQFGWALQLSLLTPYVQELGIPHAFASLVWLCGPLSGLLVQPLVGHLSDRIAPAASPLGRRRPFIAAGAASIAAAVLTVGFSADLGRIFGDSITPGSTRLGAIIVYLVGFWLLDVGNNATQGPCRAFLADLTENDPRRTRIANAYFSLFMALGNILGYATGAYSGWYKIFPFTVTPSCSISCANLKSAFLLDIIILVVTTCITVASVQEPQSFGSDEADHPSTEQEAFLWELFGSFRYFTLPVWMVLIVTALTWIGWFPFILFDTDWMGREIYRGSPDDPSITQSYHDGVRMGSFGLMLNSVLLGFTSIVLEKLCRKWGAGLVWGVSNILMALCFVAMLVITYVAKNMDYPPSGVPPTGIVIASLVVFTILGAPLAITYSIPYAMAASRVENLGLGQGLAMGILNLAIVIPQVIVSLGSGPWDQLFGGGNAPAFAVAAAASFIGGLVAILGLPRARIASRRRGHR.

Topologically, residues 1-31 (MPRRPSGGGGGAGPAAAAVRKVPLRKLLRAA) are cytoplasmic. A helical transmembrane segment spans residues 32-52 (SVACGVQFGWALQLSLLTPYV). Residues 53 to 55 (QEL) are Extracellular-facing. The chain crosses the membrane as a helical span at residues 56 to 76 (GIPHAFASLVWLCGPLSGLLV). Residues 77-98 (QPLVGHLSDRIAPAASPLGRRR) lie on the Cytoplasmic side of the membrane. The helical transmembrane segment at 99–119 (PFIAAGAASIAAAVLTVGFSA) threads the bilayer. At 120 to 135 (DLGRIFGDSITPGSTR) the chain is on the extracellular side. Residues 136–156 (LGAIIVYLVGFWLLDVGNNAT) traverse the membrane as a helical segment. Topologically, residues 157–176 (QGPCRAFLADLTENDPRRTR) are cytoplasmic. The chain crosses the membrane as a helical span at residues 177-197 (IANAYFSLFMALGNILGYATG). Topologically, residues 198-222 (AYSGWYKIFPFTVTPSCSISCANLK) are extracellular. Residues 223–243 (SAFLLDIIILVVTTCITVASV) traverse the membrane as a helical segment. Over 244–278 (QEPQSFGSDEADHPSTEQEAFLWELFGSFRYFTLP) the chain is Cytoplasmic. A helical transmembrane segment spans residues 279–299 (VWMVLIVTALTWIGWFPFILF). At 300 to 327 (DTDWMGREIYRGSPDDPSITQSYHDGVR) the chain is on the extracellular side. A helical membrane pass occupies residues 328 to 348 (MGSFGLMLNSVLLGFTSIVLE). Over 349 to 356 (KLCRKWGA) the chain is Cytoplasmic. A helical membrane pass occupies residues 357–377 (GLVWGVSNILMALCFVAMLVI). Topologically, residues 378 to 394 (TYVAKNMDYPPSGVPPT) are extracellular. The helical transmembrane segment at 395–415 (GIVIASLVVFTILGAPLAITY) threads the bilayer. Over 416–433 (SIPYAMAASRVENLGLGQ) the chain is Cytoplasmic. Residues 434-454 (GLAMGILNLAIVIPQVIVSLG) form a helical membrane-spanning segment. Over 455-467 (SGPWDQLFGGGNA) the chain is Extracellular. The chain crosses the membrane as a helical span at residues 468-488 (PAFAVAAAASFIGGLVAILGL). Topologically, residues 489 to 501 (PRARIASRRRGHR) are cytoplasmic.

This sequence belongs to the glycoside-pentoside-hexuronide (GPH) cation symporter transporter (TC 2.A.2.4) family. As to quaternary structure, homodimer. In terms of tissue distribution, widely expressed.

The protein localises to the cell membrane. The protein operates within glycan biosynthesis; sucrose metabolism. In terms of biological role, responsible for the transport of sucrose into the cell, with the concomitant uptake of protons (symport system). May also transport other glucosides. The chain is Sucrose transport protein SUT2 (SUT2) from Oryza sativa subsp. japonica (Rice).